The primary structure comprises 311 residues: Cbb3-type cytochrome c oxidase subunit CcoP1 (311 aa).

The next 2 membrane-spanning stretches (helical) occupy residues 4 to 24 (FWSG…FWLI) and 56 to 76 (RWWF…LVLY). Cytochrome c domains are found at residues 130-209 (QAVK…RKDL) and 220-302 (ADLS…YSLS). Residues Cys-143, Cys-146, His-147, Met-186, Cys-233, Cys-236, His-237, and Met-279 each contribute to the heme c site.

The protein belongs to the CcoP / FixP family. In terms of assembly, component of the cbb3-type cytochrome c oxidase at least composed of CcoN, CcoO, CcoQ and CcoP. The cofactor is heme c.

It localises to the cell inner membrane. It functions in the pathway energy metabolism; oxidative phosphorylation. In terms of biological role, C-type cytochrome. Part of the cbb3-type cytochrome c oxidase complex. CcoP subunit is required for transferring electrons from donor cytochrome c via its heme groups to CcoO subunit. From there, electrons are shuttled to the catalytic binuclear center of CcoN subunit where oxygen reduction takes place. The complex also functions as a proton pump. The sequence is that of Cbb3-type cytochrome c oxidase subunit CcoP1 from Stutzerimonas stutzeri (Pseudomonas stutzeri).